A 291-amino-acid polypeptide reads, in one-letter code: ATP synthase subunit a (291 aa).

6 helical membrane passes run 51-71 (FSFT…LLLV), 117-137 (FFPC…QGMI), 146-166 (HFLI…IVGF), 173-193 (FLSF…LVLL), 213-233 (MMAG…MLCM), and 239-259 (FIGD…ELGV).

It belongs to the ATPase A chain family. F-type ATPases have 2 components, CF(1) - the catalytic core - and CF(0) - the membrane proton channel. CF(1) has five subunits: alpha(3), beta(3), gamma(1), delta(1), epsilon(1). CF(0) has three main subunits: a, b and c.

It localises to the mitochondrion inner membrane. Its function is as follows. Mitochondrial membrane ATP synthase (F(1)F(0) ATP synthase or Complex V) produces ATP from ADP in the presence of a proton gradient across the membrane which is generated by electron transport complexes of the respiratory chain. F-type ATPases consist of two structural domains, F(1) - containing the extramembraneous catalytic core and F(0) - containing the membrane proton channel, linked together by a central stalk and a peripheral stalk. During catalysis, ATP synthesis in the catalytic domain of F(1) is coupled via a rotary mechanism of the central stalk subunits to proton translocation. Key component of the proton channel; it may play a direct role in the translocation of protons across the membrane. The sequence is that of ATP synthase subunit a (ATP6) from Vicia faba (Broad bean).